The primary structure comprises 399 residues: MAKHCPNDDLSKIPDEELVRWSKEDLIRRLRRVDGEKMSLMLEHSNMMKDVNRSLQVHLHEIRNLKEINQKLQDDNQELRELCCFLDDDRQKGKKLSREWQRFGKFTASSVWKEVSTYQQKLKELEINQENVLRENAELKDIILMLDEDRNGAGSRSSIDSQSSLSNLNGGSGTVRDVGDGSSTSSGGSAGSPDHHHNHIHKTVEAKIGTVRRSMDDLSAPHHHRSIPAGLNDASSNYIRQLETKVRILEDNNNKLLSQPCSRYSLSKLSMKYNPGDLRALRKGMTLYHSESQLSSLPQRQEALLNGTGRLQTSESSPSTGFISSAQKPEAVVHAMKVLEVHDNLEKQLPEESEEDLSEKEKAIVREMCNVVWRKLGDATGTKPSLRQQLSGNQFKAPL.

2 coiled-coil regions span residues 52-84 (NRSLQVHLHEIRNLKEINQKLQDDNQELRELCC) and 113-144 (KEVSTYQQKLKELEINQENVLRENAELKDIIL). The disordered stretch occupies residues 151–199 (NGAGSRSSIDSQSSLSNLNGGSGTVRDVGDGSSTSSGGSAGSPDHHHNH). Low complexity predominate over residues 155-169 (SRSSIDSQSSLSNLN).

It belongs to the CCDC85 family.

The protein localises to the cell junction. The protein resides in the tight junction. It localises to the adherens junction. Functionally, may play a role in cell-cell adhesion and epithelium development through its interaction with proteins of the beta-catenin family. May play an important role in cortical development, especially in the maintenance of radial glia. This chain is Coiled-coil domain-containing protein 85C-B (ccdc85cb), found in Danio rerio (Zebrafish).